The sequence spans 426 residues: Histidine--tRNA ligase (426 aa).

It belongs to the class-II aminoacyl-tRNA synthetase family. In terms of assembly, homodimer.

Its subcellular location is the cytoplasm. The enzyme catalyses tRNA(His) + L-histidine + ATP = L-histidyl-tRNA(His) + AMP + diphosphate + H(+). This chain is Histidine--tRNA ligase, found in Streptococcus equi subsp. zooepidemicus (strain H70).